Here is a 560-residue protein sequence, read N- to C-terminus: Nibrin homolog (560 aa).

Residues 25–87 enclose the FHA domain; sequence YKVGRKDCDV…YGTFFNKVQG (63 aa). In terms of domain architecture, BRCT spans 115–190; it reads TFRLSFVPIV…KQIVLGDWFK (76 aa). The Nuclear localization signal signature appears at 511–518; it reads YKRGTVID.

The protein belongs to the Nibrin family. In terms of assembly, component of the MRN complex composed of two heterodimers RAD50 and MRE11 associated with a single NBS1.

The protein resides in the nucleus. It localises to the chromosome. In terms of biological role, component of the MRN complex, which plays a central role in double-strand break (DSB) repair, DNA recombination, maintenance of telomere integrity and meiosis. The MRN complex is involved in the repair of DNA double-strand breaks (DSBs) via homologous recombination (HR), an error-free mechanism which primarily occurs during S and G2 phases. The complex (1) mediates the end resection of damaged DNA, which generates proper single-stranded DNA, a key initial steps in HR, and is (2) required for the recruitment of other repair factors and efficient activation of ATM and ATR upon DNA damage. The MRN complex possesses single-strand endonuclease activity and double-strand-specific 3'-5' exonuclease activity, which are provided by MRE11, to initiate end resection, which is required for single-strand invasion and recombination. Within the MRN complex, NBS1 acts as a protein-protein adapter, which specifically recognizes and binds phosphorylated proteins, promoting their recruitment to DNA damage sites. Recruits MRE11 and RAD50 components of the MRN complex to DSBs in response to DNA damage. The sequence is that of Nibrin homolog from Oryza sativa subsp. indica (Rice).